The following is a 286-amino-acid chain: E3 ubiquitin-protein ligase SINA-like 7 (286 aa).

The segment at 51 to 87 (CPICYEAFTIPIFQCDNGHLACSSCCPKLNNKCPACT) adopts an RING-type zinc-finger fold. The segment at 101–285 (VLESILIPCP…MRISVKKLNK (185 aa)) is SBD. An SIAH-type zinc finger spans residues 104–162 (SILIPCPNAKLGCKKNVSYGKELTHEKECMFSHCACPALDCNYTSSYKDLYTHYRITHM). Residues Cys109, Cys116, His128, Cys132, Cys139, Cys144, His156, and His161 each contribute to the Zn(2+) site.

The protein belongs to the SINA (Seven in absentia) family.

The enzyme catalyses S-ubiquitinyl-[E2 ubiquitin-conjugating enzyme]-L-cysteine + [acceptor protein]-L-lysine = [E2 ubiquitin-conjugating enzyme]-L-cysteine + N(6)-ubiquitinyl-[acceptor protein]-L-lysine.. It participates in protein modification; protein ubiquitination. Its function is as follows. E3 ubiquitin-protein ligase that mediates ubiquitination and subsequent proteasomal degradation of target proteins. E3 ubiquitin ligases accept ubiquitin from an E2 ubiquitin-conjugating enzyme in the form of a thioester and then directly transfers the ubiquitin to targeted substrates. It probably triggers the ubiquitin-mediated degradation of different substrates. The chain is E3 ubiquitin-protein ligase SINA-like 7 from Arabidopsis thaliana (Mouse-ear cress).